Consider the following 1363-residue polypeptide: DNA-directed RNA polymerase subunit beta' (1363 aa).

The tract at residues 1–39 (MTSTPSKSRKSSKGSKAAKAAASAPETRPLAKTPPPFRN) is disordered. The span at 14 to 24 (GSKAAKAAASA) shows a compositional bias: low complexity. Residues Cys248, Cys315, Cys322, and Cys325 each contribute to the Zn(2+) site.

This sequence belongs to the RNA polymerase beta' chain family. RpoC2 subfamily. As to quaternary structure, in cyanobacteria the RNAP catalytic core is composed of 2 alpha, 1 beta, 1 beta', 1 gamma and 1 omega subunit. When a sigma factor is associated with the core the holoenzyme is formed, which can initiate transcription. It depends on Zn(2+) as a cofactor.

It catalyses the reaction RNA(n) + a ribonucleoside 5'-triphosphate = RNA(n+1) + diphosphate. In terms of biological role, DNA-dependent RNA polymerase catalyzes the transcription of DNA into RNA using the four ribonucleoside triphosphates as substrates. The polypeptide is DNA-directed RNA polymerase subunit beta' (Synechococcus sp. (strain WH7803)).